The following is a 751-amino-acid chain: Photosystem I P700 chlorophyll a apoprotein A1 (751 aa).

Helical transmembrane passes span 73–96 (VFSA…FHGA), 159–182 (LYAT…FHYH), 198–222 (MNHH…HISL), 294–312 (EAHH…GHQY), 349–372 (WHAQ…HHMY), 388–414 (LSLF…IFMV), 436–458 (AIIS…LYIH), and 533–551 (FLVH…LILL). Residues Cys575 and Cys584 each coordinate [4Fe-4S] cluster. 2 consecutive transmembrane segments (helical) span residues 591–612 (HVFL…HFSW) and 665–687 (LSAY…MFLF). Chlorophyll a' is bound at residue His676. Met684 and Tyr692 together coordinate chlorophyll a. Trp693 is a binding site for phylloquinone. Residues 725-745 (AVGVAHYLLGGIATTWSFFLA) traverse the membrane as a helical segment.

Belongs to the PsaA/PsaB family. In terms of assembly, the PsaA/B heterodimer binds the P700 chlorophyll special pair and subsequent electron acceptors. PSI consists of a core antenna complex that captures photons, and an electron transfer chain that converts photonic excitation into a charge separation. The eukaryotic PSI reaction center is composed of at least 11 subunits. P700 is a chlorophyll a/chlorophyll a' dimer, A0 is one or more chlorophyll a, A1 is one or both phylloquinones and FX is a shared 4Fe-4S iron-sulfur center. serves as cofactor.

It localises to the plastid. The protein resides in the chloroplast thylakoid membrane. It carries out the reaction reduced [plastocyanin] + hnu + oxidized [2Fe-2S]-[ferredoxin] = oxidized [plastocyanin] + reduced [2Fe-2S]-[ferredoxin]. PsaA and PsaB bind P700, the primary electron donor of photosystem I (PSI), as well as the electron acceptors A0, A1 and FX. PSI is a plastocyanin/cytochrome c6-ferredoxin oxidoreductase, converting photonic excitation into a charge separation, which transfers an electron from the donor P700 chlorophyll pair to the spectroscopically characterized acceptors A0, A1, FX, FA and FB in turn. Oxidized P700 is reduced on the lumenal side of the thylakoid membrane by plastocyanin or cytochrome c6. The sequence is that of Photosystem I P700 chlorophyll a apoprotein A1 from Oltmannsiellopsis viridis (Marine flagellate).